The sequence spans 1052 residues: MSADQEPVAFLAKQPWRPKQVTEDPDEEDEEDGDEGKNGFSLEEVLRLGGTKQDYLMLATLDENEEVVDGGKKGTIDDLQQGELESFIQNLNLAKYSKSLIEEDEPEKKENASKKEAKLLKVENKKQKATEGKKTSEKKVKNKTVAEQRPESCPVSKAKKDKQPDVFEFLERQTMLLRPGGKWYDMEYSGEYSLEPQPPDVVSKYKALAQKLYEHEVSLFKSKTNNQKGGSSTWMKAIVSSGTLADRMAAMILLIQDDAVHTLQFVETLMSLVKKKGSKQQCLMALDTFKELLITDLLPDSRKLRVFSQHPFHKLEEMSSGNKDSRDRRLILWYYEHQLKHLVAEFVQVLETLSHDSLVTTKTRALVAAHELLCDKPEEEKALLVQVINKLGDPQNRIATKASHLLEVLLRKHPNMKGVVCGEIERLLFRSNISPKAQYYAICFLNQMVLSHEESELANKLITLYFCFFRTCIKKKDIESKMLSAILTGVNRAYPYSQIGDDKVREQVDTLFKVLHVVNFNTSVQALMLLFQVMNSQQTISDRYYTALYRKMLDPGLTTCSKQAMFLNLIYKSLKADIMLRRVKAFVKRLLQVTCTQMPPFICGALYLVSEILKAKPDLRSQLDDHPESDEENFVDVGDDSDDEKFTDADKGTATDAVKEVESKETEPESSAEAEKPKAASWVHFDNLKGGKQIKTYDPFSRNPLFCGAENTTLWELKKLSEHFHPSVALFAKTILEGNCIQYSGDPLQDFTLMRFLDRFVYRNPKLHKGKENTDSVVMQPKRKHFMKNVRDLAVNSKEFLAKEESQIPVDEVFFYRYYKKVAVVKDKQKRSADEESIEDIDDEEFENMIDTFEDDNCFPPGKDDIDFASNMKKTKGAKADLEDSESSDGELGDLDDDEVSLGSMNDEDFEIDEDGGTFMDVSDDESEDAPEFADANPKANTKKSKRKSEDDFDFAGSFQGQKKKKKSFNDSSLFVSAEEFGHLLDENMGSKFDTIGMNAMANRDNASFKQLKWEAERDDWLHNRDVKSIIKKKKNFRKKMKAPQKPKRQRK.

Disordered regions lie at residues 1-40 (MSAD…KNGF), 122-158 (VENK…VSKA), and 621-677 (SQLD…AEKP). Residues 23 to 34 (EDPDEEDEEDGD) show a composition bias toward acidic residues. A compositionally biased stretch (basic and acidic residues) spans 122–150 (VENKKQKATEGKKTSEKKVKNKTVAEQRP). The segment covering 627–643 (PESDEENFVDVGDDSDD) has biased composition (acidic residues). Serine 629 and serine 641 each carry phosphoserine. Basic and acidic residues predominate over residues 644–677 (EKFTDADKGTATDAVKEVESKETEPESSAEAEKP). At serine 837 the chain carries Phosphoserine. The disordered stretch occupies residues 876-969 (KGAKADLEDS…QGQKKKKKSF (94 aa)). The span at 883–932 (EDSESSDGELGDLDDDEVSLGSMNDEDFEIDEDGGTFMDVSDDESEDAPE) shows a compositional bias: acidic residues. A phosphoserine mark is found at serine 958, serine 972, and serine 977. The segment at 1032–1052 (KKKKNFRKKMKAPQKPKRQRK) is disordered.

This sequence belongs to the CBF/MAK21 family. As to expression, ubiquitous.

The protein resides in the nucleus. In terms of biological role, stimulates transcription from the HSP70 promoter. The sequence is that of CCAAT/enhancer-binding protein zeta (Cebpz) from Mus musculus (Mouse).